A 270-amino-acid chain; its full sequence is Ribitol operon repressor (270 aa).

The 61-residue stretch at 1–61 folds into the HTH lacI-type domain; it reads MKKITIYDLA…INRQASMLRS (61 aa). Positions 6-25 form a DNA-binding region, H-T-H motif; the sequence is IYDLAELSGVSASAVSAILN.

Its function is as follows. Repressor for the genes of the ribitol operon. Binds D-ribulose as an inducer. The chain is Ribitol operon repressor (rbtR) from Klebsiella aerogenes (Enterobacter aerogenes).